We begin with the raw amino-acid sequence, 286 residues long: Probable ketoamine kinase YniA (286 aa).

91-93 serves as a coordination point for ATP; sequence DYL. The active-site Proton acceptor is the aspartate 193.

Belongs to the fructosamine kinase family.

Functionally, ketoamine kinase that phosphorylates ketoamines on the third carbon of the sugar moiety to generate ketoamine 3-phosphate. Its precise substrate are unknown: does not have ribulosamine and/or erythrulosamine 3-kinase activity in vitro. The protein is Probable ketoamine kinase YniA (yniA) of Escherichia coli (strain K12).